The following is a 263-amino-acid chain: Aquaporin Lacbi1:233199 (263 aa).

Residues 1–17 (MFTLAHHRHAIRKPMAE) are Cytoplasmic-facing. A helical transmembrane segment spans residues 18 to 38 (FFGVALLVIFGAGAACQVVLS). Residues 39–44 (TNPNSF) are Extracellular-facing. The chain crosses the membrane as a helical span at residues 45-65 (LSINFGWAIGIAMGAWISGSI). Residues 66 to 88 (SGGHINPAITIAMATYRGFPWRE) are Cytoplasmic-facing. The short motif at 71–73 (NPA) is the NPA 1 element. Residues 89–109 (VPSYILAQVLGGVVGAALVYA) traverse the membrane as a helical segment. Residues 110-143 (NYIHAIDVFEGGRHIRTQATASLFATYALPYMTQ) are Extracellular-facing. The chain crosses the membrane as a helical span at residues 144–164 (VSCFFSEFLATAVLAMMVLAL). The Cytoplasmic portion of the chain corresponds to 165–174 (TDNRNGAPTN). The chain crosses the membrane as a helical span at residues 175–195 (GLSPFALFVLFIGLGASLGME). Residues 196–227 (TAYALNPARDFGPRLFLAMAGYGKALFNYRSQ) are Extracellular-facing. The NPA 2 signature appears at 201-203 (NPA). Residues 228 to 248 (YWLWAPIIAPVLGAQAGGLLY) traverse the membrane as a helical segment. Residues 249 to 263 (DTFLYDGDDSPIKWR) lie on the Cytoplasmic side of the membrane.

This sequence belongs to the MIP/aquaporin (TC 1.A.8) family.

The protein resides in the membrane. The enzyme catalyses H2O(in) = H2O(out). In terms of biological role, probable water channel required to facilitate the transport of water across membranes. This Laccaria bicolor (strain S238N-H82 / ATCC MYA-4686) (Bicoloured deceiver) protein is Aquaporin Lacbi1:233199.